Reading from the N-terminus, the 35-residue chain is Photosystem II reaction center protein Psb30 (35 aa).

The chain crosses the membrane as a helical span at residues 6-26 (VIVQLVFLALIITTGPVIIVY).

It belongs to the Psb30/Ycf12 family. As to quaternary structure, PSII is composed of 1 copy each of membrane proteins PsbA, PsbB, PsbC, PsbD, PsbE, PsbF, PsbH, PsbI, PsbJ, PsbK, PsbL, PsbM, PsbT, PsbY, PsbZ, Psb30/Ycf12, peripheral proteins of the oxygen-evolving complex and a large number of cofactors. It forms dimeric complexes.

The protein localises to the plastid. It localises to the chloroplast thylakoid membrane. Its function is as follows. A core subunit of photosystem II (PSII), probably helps stabilize the reaction center. The chain is Photosystem II reaction center protein Psb30 from Cyanidium caldarium (Red alga).